A 200-amino-acid chain; its full sequence is Probable GTP-binding protein EngB (200 aa).

Residues 26 to 200 enclose the EngB-type G domain; that stretch reads SIPEIAIAGR…IYEIAQCIKK (175 aa). GTP is bound by residues 34–41, 61–65, 80–83, 147–150, and 179–181; these read GRSNVGKS, GCTKQ, DLPG, TKID, and TSS. The Mg(2+) site is built by serine 41 and threonine 63.

It belongs to the TRAFAC class TrmE-Era-EngA-EngB-Septin-like GTPase superfamily. EngB GTPase family. Requires Mg(2+) as cofactor.

Functionally, necessary for normal cell division and for the maintenance of normal septation. The chain is Probable GTP-binding protein EngB from Ehrlichia chaffeensis (strain ATCC CRL-10679 / Arkansas).